The following is a 93-amino-acid chain: Aspartyl/glutamyl-tRNA(Asn/Gln) amidotransferase subunit C (93 aa).

The protein belongs to the GatC family. Heterotrimer of A, B and C subunits.

The enzyme catalyses L-glutamyl-tRNA(Gln) + L-glutamine + ATP + H2O = L-glutaminyl-tRNA(Gln) + L-glutamate + ADP + phosphate + H(+). It catalyses the reaction L-aspartyl-tRNA(Asn) + L-glutamine + ATP + H2O = L-asparaginyl-tRNA(Asn) + L-glutamate + ADP + phosphate + 2 H(+). Allows the formation of correctly charged Asn-tRNA(Asn) or Gln-tRNA(Gln) through the transamidation of misacylated Asp-tRNA(Asn) or Glu-tRNA(Gln) in organisms which lack either or both of asparaginyl-tRNA or glutaminyl-tRNA synthetases. The reaction takes place in the presence of glutamine and ATP through an activated phospho-Asp-tRNA(Asn) or phospho-Glu-tRNA(Gln). In Nautilia profundicola (strain ATCC BAA-1463 / DSM 18972 / AmH), this protein is Aspartyl/glutamyl-tRNA(Asn/Gln) amidotransferase subunit C.